The primary structure comprises 330 residues: 3',5'-cyclic-nucleotide phosphodiesterase (330 aa).

A signal peptide spans 1-22; sequence MFKNKLAVLFTCLSVFSFSAQS.

It belongs to the cyclic nucleotide phosphodiesterase class-II family.

It is found in the periplasm. It carries out the reaction a nucleoside 3',5'-cyclic phosphate + H2O = a nucleoside 5'-phosphate + H(+). Functionally, seems to allow the organism to grow on cAMP. The chain is 3',5'-cyclic-nucleotide phosphodiesterase (cpdP) from Aliivibrio fischeri (Vibrio fischeri).